The chain runs to 206 residues: MDRLLVLVRHGQSEWNLKNLFTGWRDPNLTDQGVSEARRAGALLAAEGLSFDVAYTSALTRAQRTCQLVLEEMGLTGLRTIADQALNERDYGDLSGLNKDDARAKFGEEQVHVWRRSYDISPPGGESLRDTVARVLPYFVQEILPSVLRGERTLVAAHGNSLRALVMVLERLSPEGIMKRELATGAPILYRLGADATVSEKRDILI.

Residues 9–16 (RHGQSEWN), 22–23 (TG), arginine 61, 88–91 (ERDY), lysine 99, 115–116 (RR), and 159–160 (GN) contribute to the substrate site. Histidine 10 serves as the catalytic Tele-phosphohistidine intermediate. The active-site Proton donor/acceptor is glutamate 88.

Belongs to the phosphoglycerate mutase family. BPG-dependent PGAM subfamily. In terms of assembly, homodimer.

The enzyme catalyses (2R)-2-phosphoglycerate = (2R)-3-phosphoglycerate. Its pathway is carbohydrate degradation; glycolysis; pyruvate from D-glyceraldehyde 3-phosphate: step 3/5. In terms of biological role, catalyzes the interconversion of 2-phosphoglycerate and 3-phosphoglycerate. The polypeptide is 2,3-bisphosphoglycerate-dependent phosphoglycerate mutase (Azorhizobium caulinodans (strain ATCC 43989 / DSM 5975 / JCM 20966 / LMG 6465 / NBRC 14845 / NCIMB 13405 / ORS 571)).